The primary structure comprises 415 residues: Serine hydroxymethyltransferase (415 aa).

Residues L119 and 123-125 contribute to the (6S)-5,6,7,8-tetrahydrofolate site; that span reads GHL. An N6-(pyridoxal phosphate)lysine modification is found at K228.

It belongs to the SHMT family. Homodimer. Pyridoxal 5'-phosphate serves as cofactor.

It localises to the cytoplasm. The enzyme catalyses (6R)-5,10-methylene-5,6,7,8-tetrahydrofolate + glycine + H2O = (6S)-5,6,7,8-tetrahydrofolate + L-serine. The protein operates within one-carbon metabolism; tetrahydrofolate interconversion. Its pathway is amino-acid biosynthesis; glycine biosynthesis; glycine from L-serine: step 1/1. Catalyzes the reversible interconversion of serine and glycine with tetrahydrofolate (THF) serving as the one-carbon carrier. This reaction serves as the major source of one-carbon groups required for the biosynthesis of purines, thymidylate, methionine, and other important biomolecules. Also exhibits THF-independent aldolase activity toward beta-hydroxyamino acids, producing glycine and aldehydes, via a retro-aldol mechanism. This chain is Serine hydroxymethyltransferase, found in Coprothermobacter proteolyticus (strain ATCC 35245 / DSM 5265 / OCM 4 / BT).